A 542-amino-acid polypeptide reads, in one-letter code: 1-aminocyclopropane-1-carboxylate synthase 6 (542 aa).

The tract at residues 1 to 28 (MRRSGNGGAAKKKKKRSASAASERRPRA) is disordered. Lys379 carries the post-translational modification N6-(pyridoxal phosphate)lysine.

The protein belongs to the class-I pyridoxal-phosphate-dependent aminotransferase family. It depends on pyridoxal 5'-phosphate as a cofactor. As to expression, expressed in leaves.

Its subcellular location is the plastid. It localises to the amyloplast membrane. The enzyme catalyses S-adenosyl-L-methionine = 1-aminocyclopropane-1-carboxylate + S-methyl-5'-thioadenosine + H(+). It participates in alkene biosynthesis; ethylene biosynthesis via S-adenosyl-L-methionine; ethylene from S-adenosyl-L-methionine: step 1/2. Catalyzes the formation of 1-aminocyclopropane-1-carboxylate, a direct precursor of ethylene in higher plants. Required for the regulation of starch grain size in endosperm. The protein is 1-aminocyclopropane-1-carboxylate synthase 6 of Oryza sativa subsp. japonica (Rice).